Here is a 294-residue protein sequence, read N- to C-terminus: Nucleophosmin (294 aa).

Position 1 is an N-acetylmethionine (Met-1). The necessary for interaction with APEX1 stretch occupies residues 1 to 117 (MEDSMDMDMS…PVHISGQHLV (117 aa)). The interval 1-186 (MEDSMDMDMS…DDDDFDDEEA (186 aa)) is required for interaction with SENP3. At Ser-4 the chain carries Phosphoserine; by PLK1 and PLK2. At Ser-10 the chain carries Phosphoserine. Lys-27 participates in a covalent cross-link: Glycyl lysine isopeptide (Lys-Gly) (interchain with G-Cter in SUMO2). An N6-acetyllysine; alternate modification is found at Lys-32. A Glycyl lysine isopeptide (Lys-Gly) (interchain with G-Cter in SUMO1); alternate cross-link involves residue Lys-32. A Glycyl lysine isopeptide (Lys-Gly) (interchain with G-Cter in SUMO2); alternate cross-link involves residue Lys-32. Phosphoserine is present on Ser-43. Tyr-67 is modified (phosphotyrosine). Position 70 is a phosphoserine (Ser-70). 2 positions are modified to phosphothreonine: Thr-75 and Thr-95. Positions 120-132 (EEDAESEDEEEED) are enriched in acidic residues. Positions 120–247 (EEDAESEDEE…PKGPSSVEDI (128 aa)) are disordered. Residue Ser-125 is modified to Phosphoserine; by CDK2. A phosphoserine mark is found at Ser-137 and Ser-139. A Glycyl lysine isopeptide (Lys-Gly) (interchain with G-Cter in SUMO2) cross-link involves residue Lys-141. Lys-150 carries the post-translational modification N6-acetyllysine; alternate. Lys-150 is covalently cross-linked (Glycyl lysine isopeptide (Lys-Gly) (interchain with G-Cter in SUMO2); alternate). Residues 152-157 (PQKKVK) carry the Nuclear localization signal motif. At Lys-154 the chain carries N6-acetyllysine. Residues 161 to 187 (DEDDDDDDEEDDDEDDDDDDFDDEEAE) are compositionally biased toward acidic residues. The interval 187-215 (EEKAPVKKSIRDTPAKNAQKSNQNGKDSK) is interaction with NOP2. Residues 188–200 (EKAPVKKSIRDTP) are compositionally biased toward basic and acidic residues. A Nuclear localization signal motif is present at residues 191-197 (PVKKSIR). Thr-199 is subject to Phosphothreonine; by CDK1, CDK2 and CDK6. Positions 202–222 (KNAQKSNQNGKDSKPSSTPRS) are enriched in polar residues. Ser-207 is modified (ADP-ribosylserine). Position 212 is an N6-acetyllysine (Lys-212). Residue Lys-215 forms a Glycyl lysine isopeptide (Lys-Gly) (interchain with G-Cter in SUMO2) linkage. Thr-219 carries the post-translational modification Phosphothreonine; by CDK1. Positions 223–235 (KGQESFKKQEKTP) are enriched in basic and acidic residues. Position 227 is a phosphoserine (Ser-227). An N6-acetyllysine modification is found at Lys-229. Lys-230 bears the N6-acetyllysine; alternate mark. A Glycyl lysine isopeptide (Lys-Gly) (interchain with G-Cter in SUMO); alternate cross-link involves residue Lys-230. 2 positions are modified to phosphothreonine; by CDK1: Thr-234 and Thr-237. 2 positions are modified to phosphoserine: Ser-242 and Ser-243. Positions 243–294 (SVEDIKAKMQASIEKGGSLPKVEAKFINYVKNCFRMTDQEAIQDLWQWRKSL) are required for nucleolar localization. A Glycyl lysine isopeptide (Lys-Gly) (interchain with G-Cter in SUMO1); alternate cross-link involves residue Lys-248. Glycyl lysine isopeptide (Lys-Gly) (interchain with G-Cter in SUMO2); alternate cross-links involve residues Lys-248 and Lys-250. Lys-250 bears the N6-acetyllysine; alternate mark. Ser-254 bears the Phosphoserine mark. Lys-257 is subject to N6-acetyllysine; alternate. A Glycyl lysine isopeptide (Lys-Gly) (interchain with G-Cter in SUMO1); alternate cross-link involves residue Lys-257. Residue Lys-257 forms a Glycyl lysine isopeptide (Lys-Gly) (interchain with G-Cter in SUMO2); alternate linkage. An N6-acetyllysine modification is found at Lys-257. Ser-260 is modified (phosphoserine). Residues Lys-263, Lys-267, and Lys-273 each participate in a glycyl lysine isopeptide (Lys-Gly) (interchain with G-Cter in SUMO2); alternate cross-link. Lys-263 is covalently cross-linked (Glycyl lysine isopeptide (Lys-Gly) (interchain with G-Cter in SUMO); alternate). Residues Lys-267 and Lys-273 each carry the N6-acetyllysine; alternate modification. Residue Lys-267 forms a Glycyl lysine isopeptide (Lys-Gly) (interchain with G-Cter in SUMO1); alternate linkage. N6-succinyllysine; alternate is present on Lys-267. Thr-279 is subject to Phosphothreonine. Lys-292 carries the post-translational modification N6-acetyllysine.

The protein belongs to the nucleoplasmin family. As to quaternary structure, decamer formed by two pentameric rings associated in a head-to-head fashion. Disulfide-linked dimers under certain conditions. The SWAP complex consists of NPM1, NCL, PARP1 and SWAP70. Interacts with NSUN2 and SENP3. Interacts with the methylated form of RPS10. Interacts (via N-terminal domain) with APEX1; the interaction is RNA-dependent and decreases in hydrogen peroxide-damaged cells. Interacts with isoform 1 of NEK2. Interacts with ROCK2 and BRCA2. Interacts with RPGR. Interacts with CENPW. Interacts with EIF2AK2/PKR. Interacts with CEBPA (isoform 4). Interacts with DDX31; this interaction prevents interaction between NPM1 and HDM2. Interacts with MYC; competitive with NOP53. Interacts with NOP53; the interaction is direct and competitive with MYC. Interacts with LRRC34. Interacts with RRP1B. Interacts with NPM3. Interacts with ALKBH2. Interacts with TTF1 (via C-terminal region). Interacts with NOP2. Interacts with ARID3C (via REKLES DOMAIN); the interaction mediates ARID3C nuclear shuttling. (Microbial infection) Interacts with hepatitis delta virus S-HDAg. In terms of assembly, (Microbial infection) Interacts with HTLV1 Rex protein (via N-terminal nuclear localization signal). Acetylated at C-terminal lysine residues, thereby increasing affinity to histones. Post-translationally, ADP-ribosylated. In terms of processing, phosphorylated at Ser-4 by PLK1 and PLK2. Phosphorylation at Ser-4 by PLK2 in S phase is required for centriole duplication and is sufficient to trigger centriole replication. Phosphorylation at Ser-4 by PLK1 takes place during mitosis. Phosphorylated by CDK2 at Ser-125 and Thr-199. Phosphorylation at Thr-199 may trigger initiation of centrosome duplication. Phosphorylated by CDK1 at Thr-199, Thr-219, Thr-234 and Thr-237 during cell mitosis. When these four sites are phosphorated, RNA-binding activity seem to be abolished. May be phosphorylated at Ser-70 by NEK2. The Thr-199 phosphorylated form has higher affinity for ROCK2. CDK6 triggers Thr-199 phosphorylation when complexed to Kaposi's sarcoma herpesvirus (KSHV) V-cyclin, leading to viral reactivation by reducing viral LANA levels. Sumoylated by ARF. Post-translationally, ubiquitinated. Ubiquitination leads to proteasomal degradation. Deubiquitinated by USP36.

Its subcellular location is the nucleus. It localises to the nucleolus. The protein localises to the nucleoplasm. It is found in the cytoplasm. The protein resides in the cytoskeleton. Its subcellular location is the microtubule organizing center. It localises to the centrosome. In terms of biological role, involved in diverse cellular processes such as ribosome biogenesis, centrosome duplication, protein chaperoning, histone assembly, cell proliferation, and regulation of tumor suppressors p53/TP53 and ARF. Binds ribosome presumably to drive ribosome nuclear export. Associated with nucleolar ribonucleoprotein structures and bind single-stranded nucleic acids. Acts as a chaperonin for the core histones H3, H2B and H4. Stimulates APEX1 endonuclease activity on apurinic/apyrimidinic (AP) double-stranded DNA but inhibits APEX1 endonuclease activity on AP single-stranded RNA. May exert a control of APEX1 endonuclease activity within nucleoli devoted to repair AP on rDNA and the removal of oxidized rRNA molecules. In concert with BRCA2, regulates centrosome duplication. Regulates centriole duplication: phosphorylation by PLK2 is able to trigger centriole replication. Negatively regulates the activation of EIF2AK2/PKR and suppresses apoptosis through inhibition of EIF2AK2/PKR autophosphorylation. Antagonizes the inhibitory effect of ATF5 on cell proliferation and relieves ATF5-induced G2/M blockade. In complex with MYC enhances the transcription of MYC target genes. May act as chaperonin or cotransporter in the nucleolar localization of transcription termination factor TTF1. This is Nucleophosmin from Homo sapiens (Human).